We begin with the raw amino-acid sequence, 486 residues long: N-succinylglutamate 5-semialdehyde dehydrogenase (486 aa).

Residue 220 to 225 (GSSRTG) coordinates NAD(+). Residues glutamate 243 and cysteine 277 contribute to the active site.

The protein belongs to the aldehyde dehydrogenase family. AstD subfamily.

It catalyses the reaction N-succinyl-L-glutamate 5-semialdehyde + NAD(+) + H2O = N-succinyl-L-glutamate + NADH + 2 H(+). Its pathway is amino-acid degradation; L-arginine degradation via AST pathway; L-glutamate and succinate from L-arginine: step 4/5. Functionally, catalyzes the NAD-dependent reduction of succinylglutamate semialdehyde into succinylglutamate. The protein is N-succinylglutamate 5-semialdehyde dehydrogenase of Shewanella piezotolerans (strain WP3 / JCM 13877).